A 434-amino-acid polypeptide reads, in one-letter code: Enolase (434 aa).

Residue Gln166 coordinates (2R)-2-phosphoglycerate. Catalysis depends on Glu208, which acts as the Proton donor. Residues Asp245, Glu290, and Asp317 each coordinate Mg(2+). (2R)-2-phosphoglycerate contacts are provided by Lys342, Arg371, Ser372, and Lys393. The active-site Proton acceptor is the Lys342.

Belongs to the enolase family. It depends on Mg(2+) as a cofactor.

It is found in the cytoplasm. The protein localises to the secreted. It localises to the cell surface. It carries out the reaction (2R)-2-phosphoglycerate = phosphoenolpyruvate + H2O. It participates in carbohydrate degradation; glycolysis; pyruvate from D-glyceraldehyde 3-phosphate: step 4/5. Its function is as follows. Catalyzes the reversible conversion of 2-phosphoglycerate (2-PG) into phosphoenolpyruvate (PEP). It is essential for the degradation of carbohydrates via glycolysis. This chain is Enolase, found in Caldicellulosiruptor bescii (strain ATCC BAA-1888 / DSM 6725 / KCTC 15123 / Z-1320) (Anaerocellum thermophilum).